The sequence spans 450 residues: Tubulin beta chain (450 aa).

GTP is bound by residues Glu-69, Ser-138, Gly-142, Thr-143, Gly-144, Asn-204, and Asn-226. Glu-69 lines the Mg(2+) pocket. A disordered region spans residues 427 to 450 (DATIDQEFEDEEEVEEQNDDSDEQ). A compositionally biased stretch (acidic residues) spans 430–450 (IDQEFEDEEEVEEQNDDSDEQ).

The protein belongs to the tubulin family. In terms of assembly, dimer of alpha and beta chains. A typical microtubule is a hollow water-filled tube with an outer diameter of 25 nm and an inner diameter of 15 nM. Alpha-beta heterodimers associate head-to-tail to form protofilaments running lengthwise along the microtubule wall with the beta-tubulin subunit facing the microtubule plus end conferring a structural polarity. Microtubules usually have 13 protofilaments but different protofilament numbers can be found in some organisms and specialized cells. Mg(2+) serves as cofactor.

Its subcellular location is the cytoplasm. It is found in the cytoskeleton. Tubulin is the major constituent of microtubules, a cylinder consisting of laterally associated linear protofilaments composed of alpha- and beta-tubulin heterodimers. Microtubules grow by the addition of GTP-tubulin dimers to the microtubule end, where a stabilizing cap forms. Below the cap, tubulin dimers are in GDP-bound state, owing to GTPase activity of alpha-tubulin. The chain is Tubulin beta chain from Bombyx mori (Silk moth).